The chain runs to 404 residues: Formate-dependent phosphoribosylglycinamide formyltransferase (404 aa).

N(1)-(5-phospho-beta-D-ribosyl)glycinamide-binding positions include 25–26 (EL) and Glu85. Residues Arg118, Lys159, 164-169 (SSGKGQ), 199-202 (EGFI), and Glu207 contribute to the ATP site. One can recognise an ATP-grasp domain in the interval 123–318 (RLAAEELGLP…EFELHARAIL (196 aa)). 2 residues coordinate Mg(2+): Glu277 and Glu289. N(1)-(5-phospho-beta-D-ribosyl)glycinamide is bound by residues Asp296, Lys365, and 372-373 (RR).

This sequence belongs to the PurK/PurT family. In terms of assembly, homodimer.

It catalyses the reaction N(1)-(5-phospho-beta-D-ribosyl)glycinamide + formate + ATP = N(2)-formyl-N(1)-(5-phospho-beta-D-ribosyl)glycinamide + ADP + phosphate + H(+). Its pathway is purine metabolism; IMP biosynthesis via de novo pathway; N(2)-formyl-N(1)-(5-phospho-D-ribosyl)glycinamide from N(1)-(5-phospho-D-ribosyl)glycinamide (formate route): step 1/1. Involved in the de novo purine biosynthesis. Catalyzes the transfer of formate to 5-phospho-ribosyl-glycinamide (GAR), producing 5-phospho-ribosyl-N-formylglycinamide (FGAR). Formate is provided by PurU via hydrolysis of 10-formyl-tetrahydrofolate. In Burkholderia lata (strain ATCC 17760 / DSM 23089 / LMG 22485 / NCIMB 9086 / R18194 / 383), this protein is Formate-dependent phosphoribosylglycinamide formyltransferase.